Consider the following 728-residue polypeptide: MNKGWLELESDPGLFTLLVEDFGVKGVQVEEIYDLQSKCQGPVYGFIFLFKWIEERRSRRKVSTLVDDTSVIDDDIVNNMFFAHQLIPNSCATHALLSVLLNCSNVDLGPTLSRMKDFTKGFSPESKGYAIGNAPELAKAHNSHARPEPRHLPEKQNGLSAVRTMEAFHFVSYVPITGRLFELDGLKVYPIDHGPWGEDEEWTDKARRVIMERIGLATAGEPYHDIRFNLMAVVPDRRIKYETRLHVLKVNRQTVLEALQQLIRVTQPELIQTHKSQESQLPEESKPASSKSPLGLEAGRTPVASECTQTDGAEEVAGSCPQTTTHSPPSKCKLVVKPPGSSLNGVPPNPAPIVQRLPAFLDNHNYAKSPMQEEEDLAAGVGRSRVPVRAPQQYSEDEDDYEDEDEDVQNTNPAIRYKRKGTGKPGSLSNSSDGQLSVLQPNTINVLTEKLQESQKDLSVPLSIKTSSGAGSPAVAVPTHSQPSPTPSNESTDTASEIGSAFNSPLRSPIRSANPTRPSSPVTSHISKVLFGEDDSLLRVDCIRYNRAVRDLGPVISTGLLHLAEDGVLSPLALTEGGKGSSPSTRSSQGSQGSSGLEEKEVVEVTESRDKPGLNRSSEPLSGEKYSPKELLALLKCVEAEIANYEACLKEEVEKRKKFKIDDQRRTHNYDEFICTFISMLAQEGMLANLVEQNISVRRRQGVSIGRLHKQRKPDRRKRSRPYKAKRQ.

Positions 4 to 235 (GWLELESDPG…IRFNLMAVVP (232 aa)) constitute a UCH catalytic domain. An Arg-finger motif motif is present at residues 56–60 (RRSRR). Residue Cys91 is the Nucleophile of the active site. Residue His169 is the Proton donor of the active site. Positions 273–333 (THKSQESQLP…TTHSPPSKCK (61 aa)) are disordered. Ser292 carries the post-translational modification Phosphoserine. Residues 363 to 366 (NHNY) carry the HBM-like motif motif. Residues Ser369 and Ser395 each carry the phosphoserine modification. Disordered regions lie at residues 372 to 436 (QEEE…DGQL) and 463 to 523 (SIKT…SPVT). Acidic residues predominate over residues 395-408 (SEDEDDYEDEDEDV). 2 stretches are compositionally biased toward polar residues: residues 427–436 (SLSNSSDGQL) and 479–523 (THSQ…SPVT). Phosphothreonine is present on Thr492. Residues Ser520, Ser536, and Ser584 each carry the phosphoserine modification. The interval 574-623 (LTEGGKGSSPSTRSSQGSQGSSGLEEKEVVEVTESRDKPGLNRSSEPLSG) is disordered. The segment covering 581-596 (SSPSTRSSQGSQGSSG) has biased composition (low complexity). The interval 595 to 720 (SGLEEKEVVE…QRKPDRRKRS (126 aa)) is interaction with BRCA1. The segment covering 597–613 (LEEKEVVEVTESRDKPG) has biased composition (basic and acidic residues). A coiled-coil region spans residues 629-660 (KELLALLKCVEAEIANYEACLKEEVEKRKKFK). Residues 641-685 (EIANYEACLKEEVEKRKKFKIDDQRRTHNYDEFICTFISMLAQEG) are interaction with YY1. The 29-residue stretch at 669-697 (NYDEFICTFISMLAQEGMLANLVEQNISV) folds into the ULD domain. The segment at 698 to 700 (RRR) is interaction with nucleosomal DNA forming a DNA clamp with ASXL1. A Classical bipartite Nuclear localization signal (NLS) motif is present at residues 698–721 (RRRQGVSIGRLHKQRKPDRRKRSR). The segment at 702–728 (GVSIGRLHKQRKPDRRKRSRPYKAKRQ) is disordered. The tract at residues 712–728 (RKPDRRKRSRPYKAKRQ) is positively charged C-terminal extension (CTE). The Nuclear localization signal signature appears at 716 to 721 (RRKRSR). The Non-classical PY-nuclear localization signal (PY-NLS) motif lies at 716–723 (RRKRSRPY).

Belongs to the peptidase C12 family. BAP1 subfamily. Core component of the polycomb repressive deubiquitinase (PR-DUB) complex, at least composed of BAP1, one of ASXL1, ASXL2 or (probably) ASXL3, and one of MBD5 or MBD6. The PR-DUB core associates with a number of accessory proteins, including FOXK1, FOXK2, KDM1B, HCFC1, YY1 and OGT; KDM1B specifically associates with ASXL2 PR-DUB complexes. The BAP1 deubiquitinase activity is not required for PR-DUB assembly. Homodimerizes (via coiled-coil hinge-region between the UCH and ULD domains) to mediate assembly of 2 copies of the BAP1-ASXL heterodimer into a bisymmetric tetramer; dimerization enhances association with nucleosomes. The PR-DUB complex associates with nucleosomes to mediate deubiquitination of 'lys-120' of histone H2AK118ub1 substrates; the association requires the positively charged C-terminal tail of BAP1. Interacts (via ULD domain) with ASXL1 (via DEUBAD domain); the interaction is direct and forms a ubiquitin binding cleft. The interaction with ASXL1 stabilizes BAP1 but is not required for nucleosome binding. Associates (via C-terminus) with nucleosome and chromatosome complexes through direct interaction with DNA and the histone3/4 dimer; this association displaces the histone-2A C-terminal tail, extending and orienting the H2AK118ub1 substrate towards the BAP1 deubiquitinase active site. Also interacts (via arginine finger) directly with the histone H2A-H2B acidic patch; this interaction is not critical for nucleosome-chromatosome association but may play a role in orienting the H2AK118ub1 substrate towards the PR-DUB complex active site. Interacts with BRCA1 (via the RING finger). Interacts (via HBM-like motif) with HCFC1. Interacts (via a C-terminal region overlapping the ULD domain) with YY1; the interaction is direct and requires the interaction with HCFC1. Interacts (when phosphorylated at Thr-492) with FOXK1. Interacts (when phosphorylated at Thr-492) with FOXK2; leading to recruitment of the PR-DUB complex and repression of FOXK2 target genes. Interacts (via non-classical PY-NLS) with TNPO1/transportin-1 (via HEAT repeats 8-12); the interaction is direct, mediates BAP1 nuclear localization and disrupts BAP1 homodimerization. Interacts (via C-terminus) with KPNA1/importin alpha5 and KPNA2/importin alpha1; these interactions can contribute to BAP1 nuclear localization but are less important than the interaction with TNPO1/transportin-1. The interaction with TNPO1/transportin-1 disrupts homodimerization and blocks ubiquitination by UBE2O. Post-translationally, ubiquitinated: monoubiquitinated at multiple sites within its nuclear localization signal (NLS) BY UBE2O, leading to cytoplasmic retention. Able to mediate autodeubiquitination via intramolecular interactions to counteract cytoplasmic retention. Monoubiquitinated on at least 4 sites near or within its PY-NLS. Highly expressed in mammary glands, testis and ovary. Up-regulated in mammary glands during puberty, pregnancy, and as a result of parity.

The protein resides in the cytoplasm. The protein localises to the nucleus. It localises to the chromosome. It carries out the reaction Thiol-dependent hydrolysis of ester, thioester, amide, peptide and isopeptide bonds formed by the C-terminal Gly of ubiquitin (a 76-residue protein attached to proteins as an intracellular targeting signal).. Its function is as follows. Deubiquitinating enzyme that plays a key role in chromatin by mediating deubiquitination of histone H2A and HCFC1. Catalytic component of the polycomb repressive deubiquitinase (PR-DUB) complex, a complex that specifically mediates deubiquitination of histone H2A monoubiquitinated at 'Lys-120' (H2AK119ub1). Does not deubiquitinate monoubiquitinated histone H2B. The PR-DUB complex is an epigenetic regulator of gene expression and acts as a transcriptional coactivator, affecting genes involved in development, cell communication, signaling, cell proliferation and cell viability. Antagonizes PRC1 mediated H2AK119ub1 monoubiquitination. As part of the PR-DUB complex, associates with chromatin enriched in histone marks H3K4me1, H3K4me3, and H3K27Ac, but not in H3K27me3. Acts as a regulator of cell growth by mediating deubiquitination of HCFC1 N-terminal and C-terminal chains, with some specificity toward 'Lys-48'-linked polyubiquitin chains compared to 'Lys-63'-linked polyubiquitin chains. Deubiquitination of HCFC1 does not lead to increase stability of HCFC1. Interferes with the BRCA1 and BARD1 heterodimer activity by inhibiting their ability to mediate ubiquitination and autoubiquitination. It however does not mediate deubiquitination of BRCA1 and BARD1. Able to mediate autodeubiquitination via intramolecular interactions to counteract monoubiquitination at the nuclear localization signal (NLS), thereby protecting it from cytoplasmic sequestration. Negatively regulates epithelial-mesenchymal transition (EMT) of trophoblast stem cells during placental development by regulating genes involved in epithelial cell integrity, cell adhesion and cytoskeletal organization. This chain is Ubiquitin carboxyl-terminal hydrolase BAP1 (Bap1), found in Mus musculus (Mouse).